Consider the following 225-residue polypeptide: Ribosome maturation factor RimM (225 aa).

Residues 144-225 enclose the PRC barrel domain; it reads ADEFYWVDLI…RIVVDWEADY (82 aa).

It belongs to the RimM family. In terms of assembly, binds ribosomal protein uS19.

The protein localises to the cytoplasm. In terms of biological role, an accessory protein needed during the final step in the assembly of 30S ribosomal subunit, possibly for assembly of the head region. Essential for efficient processing of 16S rRNA. May be needed both before and after RbfA during the maturation of 16S rRNA. It has affinity for free ribosomal 30S subunits but not for 70S ribosomes. This is Ribosome maturation factor RimM from Burkholderia lata (strain ATCC 17760 / DSM 23089 / LMG 22485 / NCIMB 9086 / R18194 / 383).